A 219-amino-acid chain; its full sequence is N-(5'-phosphoribosyl)anthranilate isomerase (219 aa).

This sequence belongs to the TrpF family.

It catalyses the reaction N-(5-phospho-beta-D-ribosyl)anthranilate = 1-(2-carboxyphenylamino)-1-deoxy-D-ribulose 5-phosphate. Its pathway is amino-acid biosynthesis; L-tryptophan biosynthesis; L-tryptophan from chorismate: step 3/5. The chain is N-(5'-phosphoribosyl)anthranilate isomerase from Dehalococcoides mccartyi (strain ATCC BAA-2266 / KCTC 15142 / 195) (Dehalococcoides ethenogenes (strain 195)).